A 449-amino-acid chain; its full sequence is MLWKITDNVKYEEDCEDRHDSSSNGNPRIPHLSSPGQHLYSPAPPLSHTGVAEYQPPPYFPPPYQQLAYSQSADHYSHLGEAYAAAMNPLHQPAATGSQQQAWPGRQSQEGSSLASHHSRSASLIPHISGLEGGSVSARREVYRRSDLLLPHAHALEAGLAENLGLHEMAHPIEEVQNVDDAHLLLHDQTVIRKGPISMTKNPLGLPCQKDLVGVVMNPSEVFCSVPGRLSLLSSTSKYKVTVAEVQRRLSPPECLNASLLGGVLRRAKSKNGGRSLREKLDKIGLNLPAGRRKAAHVTLLTSLVEGEAVHLARDFAYVCEAEFPSKAVADYLTRPHLGGRNEMATRKSMLLAAQQVCKEFTDLLHQDRTPNGNNRPAQVLEPNIQNCLSHFSLITHGFGSQAICAAVSAVQNYIKEALIAIDKSYMNPGDQSPADSSKTMEKMEKHRK.

Residue Lys-10 forms a Glycyl lysine isopeptide (Lys-Gly) (interchain with G-Cter in SUMO) linkage. Positions 13 to 58 (EDCEDRHDSSSNGNPRIPHLSSPGQHLYSPAPPLSHTGVAEYQPPP) are disordered. The short motif at 59 to 64 (YFPPPY) is the PPxY motif element. The tract at residues 94–130 (AATGSQQQAWPGRQSQEGSSLASHHSRSASLIPHISG) is disordered. Positions 95 to 111 (ATGSQQQAWPGRQSQEG) are enriched in polar residues. The segment covering 112-124 (SSLASHHSRSASL) has biased composition (low complexity). At Ser-251 the chain carries Phosphoserine; by PKA. The interval 292-423 (RRKAAHVTLL…YIKEALIAID (132 aa)) is H-S-H (helix-span-helix), dimerization. The tract at residues 426 to 449 (YMNPGDQSPADSSKTMEKMEKHRK) is disordered. The residue at position 433 (Ser-433) is a Phosphoserine. Over residues 439-449 (KTMEKMEKHRK) the composition is skewed to basic and acidic residues.

The protein belongs to the AP-2 family. In terms of assembly, binds DNA as a dimer. Can form homodimers or heterodimers with other AP-2 family members. Interacts with WWOX. Interacts with UBE2I. Interacts with KCTD1; this interaction represses transcription activation. Interacts with CITED2 (via C-terminus); the interaction stimulates TFAP2B-transcriptional activity. Interacts with CITED4. Interacts with MTA1. Post-translationally, sumoylated on Lys-10; which inhibits transcriptional activity. Expressed in lung, ovary and testis. Expressed in most squamous epithelia. Also, detected in several exocrine glands including the prostate, the preputial and salivary glands, serous glands of the tongue and ocular harderian glands.

The protein resides in the nucleus. In terms of biological role, sequence-specific DNA-binding transcription factor that interacts with cellular enhancer elements to regulate transcription of selected genes, and which plays a key role in early embryonic development. AP-2 factors bind to the consensus sequence 5'-GCCNNNGGC-3' and activate genes involved in a large spectrum of important biological functions. TFAP2C plays a key role in early embryonic development by regulating both inner cell mass (ICM) and trophectoderm differentiation. At the 8-cell stage, during morula development, controls expression of cell-polarity genes. Upon trophoblast commitment, binds to late trophectoderm genes in blastocysts together with CDX2, and later to extra-embryonic ectoderm genes together with SOX2. Binds to both closed and open chromatin with other transcription factors. The chain is Transcription factor AP-2 gamma from Mus musculus (Mouse).